An 80-amino-acid polypeptide reads, in one-letter code: Acyl carrier protein (80 aa).

The region spanning 4–79 (ANVEQKVKNI…DAVNYITTHK (76 aa)) is the Carrier domain. An O-(pantetheine 4'-phosphoryl)serine modification is found at serine 39.

Belongs to the acyl carrier protein (ACP) family. Post-translationally, 4'-phosphopantetheine is transferred from CoA to a specific serine of apo-ACP by AcpS. This modification is essential for activity because fatty acids are bound in thioester linkage to the sulfhydryl of the prosthetic group.

It is found in the cytoplasm. Its pathway is lipid metabolism; fatty acid biosynthesis. In terms of biological role, carrier of the growing fatty acid chain in fatty acid biosynthesis. The sequence is that of Acyl carrier protein from Anaeromyxobacter sp. (strain Fw109-5).